Here is a 308-residue protein sequence, read N- to C-terminus: Probable pyridoxal 5'-phosphate synthase subunit pdx-1 (308 aa).

Residue Asp30 participates in D-ribose 5-phosphate binding. Lys87 functions as the Schiff-base intermediate with D-ribose 5-phosphate in the catalytic mechanism. Position 159 (Gly159) interacts with D-ribose 5-phosphate. Arg171 serves as a coordination point for D-glyceraldehyde 3-phosphate. Residues Gly224 and 245-246 (GS) each bind D-ribose 5-phosphate.

It belongs to the PdxS/SNZ family.

The enzyme catalyses aldehydo-D-ribose 5-phosphate + D-glyceraldehyde 3-phosphate + L-glutamine = pyridoxal 5'-phosphate + L-glutamate + phosphate + 3 H2O + H(+). It functions in the pathway cofactor biosynthesis; pyridoxal 5'-phosphate biosynthesis. Functionally, catalyzes the formation of pyridoxal 5'-phosphate from ribose 5-phosphate (RBP), glyceraldehyde 3-phosphate (G3P) and ammonia. The ammonia is provided by pdx-2. Can also use ribulose 5-phosphate and dihydroxyacetone phosphate as substrates, resulting from enzyme-catalyzed isomerization of RBP and G3P, respectively. Also plays an indirect role in resistance to singlet oxygen-generating photosensitizers. The sequence is that of Probable pyridoxal 5'-phosphate synthase subunit pdx-1 (pdx-1) from Neurospora crassa (strain ATCC 24698 / 74-OR23-1A / CBS 708.71 / DSM 1257 / FGSC 987).